The sequence spans 285 residues: Inositol monophosphatase 1 (285 aa).

Glutamate 73, aspartate 93, isoleucine 95, and aspartate 96 together coordinate Mg(2+). Glutamate 73 is a substrate binding site. Substrate contacts are provided by residues 95–98 (IDGT), 198–200 (GTA), glutamate 217, and aspartate 224. Position 224 (aspartate 224) interacts with Mg(2+).

It belongs to the inositol monophosphatase superfamily. Homodimer. Requires Mg(2+) as cofactor.

The protein resides in the cytoplasm. It catalyses the reaction a myo-inositol phosphate + H2O = myo-inositol + phosphate. It carries out the reaction 1D-myo-inositol 1-phosphate + H2O = myo-inositol + phosphate. The catalysed reaction is 1D-myo-inositol 2-phosphate + H2O = myo-inositol + phosphate. The enzyme catalyses 1D-myo-inositol 3-phosphate + H2O = myo-inositol + phosphate. It catalyses the reaction 1D-myo-inositol 4-phosphate + H2O = myo-inositol + phosphate. It carries out the reaction 1D-myo-inositol 5-phosphate + H2O = myo-inositol + phosphate. The catalysed reaction is 1D-myo-inositol 6-phosphate + H2O = myo-inositol + phosphate. The enzyme catalyses scyllo-inositol 1-phosphate + H2O = scyllo-inositol + phosphate. It catalyses the reaction alpha-D-galactose 1-phosphate + H2O = D-galactose + phosphate. It carries out the reaction alpha-D-glucose 1-phosphate + H2O = D-glucose + phosphate. The catalysed reaction is D-glucose 6-phosphate + H2O = D-glucose + phosphate. The enzyme catalyses beta-D-fructose 1-phosphate + H2O = D-fructose + phosphate. It catalyses the reaction glycerol 2-phosphate + H2O = glycerol + phosphate. It carries out the reaction adenosine 2'-phosphate + H2O = adenosine + phosphate. Its pathway is polyol metabolism; myo-inositol biosynthesis; myo-inositol from D-glucose 6-phosphate: step 2/2. With respect to regulation, inhibited by Li(+), Ca(2+) and Mn(2+), but also by Mg(2+) at concentrations above 3 mM. Functionally, phosphatase involved in the dephosphorylation of myo-inositol monophosphate to generate myo-inositol. Is also able to dephosphorylate scyllo-inositol-phosphate, myo-inositol 1,4-diphosphate, scyllo-inositol-1,3-diphosphate and scyllo-inositol-1,4-diphosphate. Also dephosphorylates in vitro other sugar-phosphates including D-galactose-1-phosphate, glucose-1-phosphate, glucose-6-phosphate, fructose-1-phosphate, beta-glycerophosphate and 2'-AMP. Responsible for the provision of inositol required for synthesis of phosphatidylinositol and polyphosphoinositides, and involved in maintaining normal brain function. Has been implicated as the pharmacological target for lithium Li(+) action in brain. The chain is Inositol monophosphatase 1 (impa1) from Xenopus laevis (African clawed frog).